Here is a 593-residue protein sequence, read N- to C-terminus: NADH-quinone oxidoreductase subunit C/D (593 aa).

Residues 1-184 form an NADH dehydrogenase I subunit C region; it reads MTADNAIFIP…DPYSLTLAKQ (184 aa). Positions 208–593 are NADH dehydrogenase I subunit D; sequence DYMFLNLGPN…IDFVMADVDR (386 aa).

The protein in the N-terminal section; belongs to the complex I 30 kDa subunit family. This sequence in the C-terminal section; belongs to the complex I 49 kDa subunit family. In terms of assembly, NDH-1 is composed of 13 different subunits. Subunits NuoB, CD, E, F, and G constitute the peripheral sector of the complex.

Its subcellular location is the cell inner membrane. It carries out the reaction a quinone + NADH + 5 H(+)(in) = a quinol + NAD(+) + 4 H(+)(out). Its function is as follows. NDH-1 shuttles electrons from NADH, via FMN and iron-sulfur (Fe-S) centers, to quinones in the respiratory chain. The immediate electron acceptor for the enzyme in this species is believed to be ubiquinone. Couples the redox reaction to proton translocation (for every two electrons transferred, four hydrogen ions are translocated across the cytoplasmic membrane), and thus conserves the redox energy in a proton gradient. In Pseudomonas putida (strain ATCC 700007 / DSM 6899 / JCM 31910 / BCRC 17059 / LMG 24140 / F1), this protein is NADH-quinone oxidoreductase subunit C/D.